The sequence spans 649 residues: Threonine--tRNA ligase (649 aa).

Residues M1–T60 form the TGS domain. The segment at D248–P544 is catalytic. 3 residues coordinate Zn(2+): C341, H392, and H521.

The protein belongs to the class-II aminoacyl-tRNA synthetase family. Homodimer. Requires Zn(2+) as cofactor.

It localises to the cytoplasm. It catalyses the reaction tRNA(Thr) + L-threonine + ATP = L-threonyl-tRNA(Thr) + AMP + diphosphate + H(+). Catalyzes the attachment of threonine to tRNA(Thr) in a two-step reaction: L-threonine is first activated by ATP to form Thr-AMP and then transferred to the acceptor end of tRNA(Thr). Also edits incorrectly charged L-seryl-tRNA(Thr). This is Threonine--tRNA ligase from Deinococcus deserti (strain DSM 17065 / CIP 109153 / LMG 22923 / VCD115).